The chain runs to 211 residues: CASP-like protein 1B1 (211 aa).

The interval methionine 1–serine 29 is disordered. Topologically, residues methionine 1–threonine 55 are cytoplasmic. A compositionally biased stretch (low complexity) spans threonine 9–threonine 26. A helical membrane pass occupies residues alanine 56–valine 76. Topologically, residues glycine 77–alanine 94 are extracellular. Residues phenylalanine 95–phenylalanine 115 form a helical membrane-spanning segment. Topologically, residues arginine 116–arginine 123 are cytoplasmic. The helical transmembrane segment at methionine 124–alanine 144 threads the bilayer. The Extracellular portion of the chain corresponds to alanine 145–arginine 176. A helical transmembrane segment spans residues glycine 177 to leucine 197. Residues serine 198–glutamate 211 are Cytoplasmic-facing.

Belongs to the Casparian strip membrane proteins (CASP) family. Homodimer and heterodimers.

It is found in the cell membrane. In Sorghum bicolor (Sorghum), this protein is CASP-like protein 1B1.